A 373-amino-acid chain; its full sequence is Bifunctional enzyme IspD/IspF (373 aa).

Positions 1–212 are 2-C-methyl-D-erythritol 4-phosphate cytidylyltransferase; the sequence is MPDITLILLG…PCIEAPSGKT (212 aa). The interval 213 to 373 is 2-C-methyl-D-erythritol 2,4-cyclodiphosphate synthase; it reads LTGFGLDIHP…NLTYYNWKQK (161 aa). A divalent metal cation contacts are provided by aspartate 219 and histidine 221. 4-CDP-2-C-methyl-D-erythritol 2-phosphate-binding positions include 219–221 and 245–246; these read DIH and HS. Position 253 (histidine 253) interacts with a divalent metal cation. 4-CDP-2-C-methyl-D-erythritol 2-phosphate contacts are provided by residues 267-269, 272-276, 343-346, phenylalanine 350, and arginine 353; these read DIG, YPDTD, and TTAE.

It in the N-terminal section; belongs to the IspD/TarI cytidylyltransferase family. IspD subfamily. In the C-terminal section; belongs to the IspF family. A divalent metal cation serves as cofactor.

It carries out the reaction 2-C-methyl-D-erythritol 4-phosphate + CTP + H(+) = 4-CDP-2-C-methyl-D-erythritol + diphosphate. The catalysed reaction is 4-CDP-2-C-methyl-D-erythritol 2-phosphate = 2-C-methyl-D-erythritol 2,4-cyclic diphosphate + CMP. It participates in isoprenoid biosynthesis; isopentenyl diphosphate biosynthesis via DXP pathway; isopentenyl diphosphate from 1-deoxy-D-xylulose 5-phosphate: step 2/6. It functions in the pathway isoprenoid biosynthesis; isopentenyl diphosphate biosynthesis via DXP pathway; isopentenyl diphosphate from 1-deoxy-D-xylulose 5-phosphate: step 4/6. In terms of biological role, bifunctional enzyme that catalyzes the formation of 4-diphosphocytidyl-2-C-methyl-D-erythritol from CTP and 2-C-methyl-D-erythritol 4-phosphate (MEP) (IspD), and catalyzes the conversion of 4-diphosphocytidyl-2-C-methyl-D-erythritol 2-phosphate (CDP-ME2P) to 2-C-methyl-D-erythritol 2,4-cyclodiphosphate (ME-CPP) with a corresponding release of cytidine 5-monophosphate (CMP) (IspF). This Sulfurovum sp. (strain NBC37-1) protein is Bifunctional enzyme IspD/IspF.